A 255-amino-acid chain; its full sequence is Putative oxidoreductase YtkK (255 aa).

7–14 (TAGSKGLG) serves as a coordination point for NAD(+).

It belongs to the short-chain dehydrogenases/reductases (SDR) family.

This chain is Putative oxidoreductase YtkK (ytkK), found in Bacillus subtilis (strain 168).